The chain runs to 273 residues: 4-hydroxy-tetrahydrodipicolinate reductase (273 aa).

NAD(+)-binding positions include 12 to 17 and E38; that span reads GAGGRM. R39 serves as a coordination point for NADP(+). Residues 102-104 and 126-129 contribute to the NAD(+) site; these read GTT and AANF. H159 serves as the catalytic Proton donor/acceptor. A (S)-2,3,4,5-tetrahydrodipicolinate-binding site is contributed by H160. K163 acts as the Proton donor in catalysis. A (S)-2,3,4,5-tetrahydrodipicolinate-binding site is contributed by 169-170; that stretch reads GT.

It belongs to the DapB family. As to quaternary structure, homotetramer.

It is found in the cytoplasm. The enzyme catalyses (S)-2,3,4,5-tetrahydrodipicolinate + NAD(+) + H2O = (2S,4S)-4-hydroxy-2,3,4,5-tetrahydrodipicolinate + NADH + H(+). It carries out the reaction (S)-2,3,4,5-tetrahydrodipicolinate + NADP(+) + H2O = (2S,4S)-4-hydroxy-2,3,4,5-tetrahydrodipicolinate + NADPH + H(+). The protein operates within amino-acid biosynthesis; L-lysine biosynthesis via DAP pathway; (S)-tetrahydrodipicolinate from L-aspartate: step 4/4. Catalyzes the conversion of 4-hydroxy-tetrahydrodipicolinate (HTPA) to tetrahydrodipicolinate. This chain is 4-hydroxy-tetrahydrodipicolinate reductase, found in Salmonella dublin (strain CT_02021853).